We begin with the raw amino-acid sequence, 111 residues long: Disintegrin Eo1 subunit 1 (111 aa).

The signal sequence occupies residues 1-20 (MIQVLLVIICLAVFPYQGSS). The propeptide occupies 21–46 (IILESGNVNDFELVYPKKVTVLPTGA). Positions 26–111 (GNVNDFELVY…SDCPRNPWKD (86 aa)) constitute a Disintegrin domain. 4 cysteine pairs are disulfide-bonded: C53–C76, C67–C73, C72–C97, and C85–C104. Positions 89-91 (WGD) match the Cell attachment site; atypical (WGD) motif. A propeptide spanning residues 110-111 (KD) is cleaved from the precursor.

Belongs to the disintegrin family. Dimeric disintegrin subfamily. Heterodimer; disulfide-linked. In terms of tissue distribution, expressed by the venom gland.

The protein localises to the secreted. Its function is as follows. Poor inhibitor of platelet aggregation. The disintegrin inhibits the adhesion of cells expressing the RGD-dependent integrin alpha-5/beta-1 (ITGA5/ITGB1) to immobilized fibronectin. Inhibition on alpha-IIb/beta-3 (ITGA2B/ITGB3) is low. This is Disintegrin Eo1 subunit 1 from Echis ocellatus (Ocellated saw-scaled viper).